Reading from the N-terminus, the 314-residue chain is MVKPVKIGVDAKVEKTKSATAARHHEFQMNKSYGQHLLKNPLIIDAIVDKSQLKSTDTVLEIGPGTGNLTMKLLENCKKVIAIEVDPRMAAELQKRVAASPYAQHLQIILGDFLKVDLPYFDVCVANVPYQISSPLTFKLLAHRPIFRTAVLMFQKEFALRLGAKPGDSLYCRLSVNTQLLSKVTHLMKVGKNNFLPPPKVESAVVRIEPFNPPPPINFVEWDGLVKLCFSRKNKTLSGIFRVSSVIETLNQNYKTYCALEGKMNTDGSDEQMKELIIKTLTDNDFLDSRSSKLDINDFLKLLNKFHETGIHFK.

Residues His36, Leu38, Gly63, Glu84, Asp112, and Asn127 each contribute to the S-adenosyl-L-methionine site.

The protein belongs to the class I-like SAM-binding methyltransferase superfamily. rRNA adenine N(6)-methyltransferase family. Part of the small subunit (SSU) processome, composed of more than 70 proteins and the RNA chaperone small nucleolar RNA (snoRNA) U3.

The protein localises to the nucleus. Its subcellular location is the nucleoplasm. It localises to the nucleolus. It catalyses the reaction adenosine(1779)/adenosine(1780) in 18S rRNA + 4 S-adenosyl-L-methionine = N(6)-dimethyladenosine(1779)/N(6)-dimethyladenosine(1780) in 18S rRNA + 4 S-adenosyl-L-homocysteine + 4 H(+). In terms of biological role, specifically dimethylates two adjacent adenosines in the loop of a conserved hairpin near the 3'-end of 18S rRNA in the 40S particle. Involved in the pre-rRNA processing steps leading to small-subunit rRNA production independently of its RNA-modifying catalytic activity. Part of the small subunit (SSU) processome, first precursor of the small eukaryotic ribosomal subunit. During the assembly of the SSU processome in the nucleolus, many ribosome biogenesis factors, an RNA chaperone and ribosomal proteins associate with the nascent pre-rRNA and work in concert to generate RNA folding, modifications, rearrangements and cleavage as well as targeted degradation of pre-ribosomal RNA by the RNA exosome. The chain is Probable dimethyladenosine transferase (dimt1) from Dictyostelium discoideum (Social amoeba).